A 245-amino-acid polypeptide reads, in one-letter code: tRNA pseudouridine synthase A 2 (245 aa).

Catalysis depends on Asp-53, which acts as the Nucleophile. Residue Tyr-111 participates in substrate binding.

Belongs to the tRNA pseudouridine synthase TruA family. Homodimer.

The enzyme catalyses uridine(38/39/40) in tRNA = pseudouridine(38/39/40) in tRNA. Formation of pseudouridine at positions 38, 39 and 40 in the anticodon stem and loop of transfer RNAs. In Bacillus cereus (strain ATCC 10987 / NRS 248), this protein is tRNA pseudouridine synthase A 2.